The following is a 92-amino-acid chain: DNA-binding protein HU (92 aa).

It belongs to the bacterial histone-like protein family. Homodimer.

Its function is as follows. Histone-like DNA-binding protein which is capable of wrapping DNA to stabilize it, and thus to prevent its denaturation under extreme environmental conditions. This Buchnera aphidicola subsp. Acyrthosiphon pisum (strain APS) (Acyrthosiphon pisum symbiotic bacterium) protein is DNA-binding protein HU (hup).